The sequence spans 336 residues: Ribosomal RNA large subunit methyltransferase F (336 aa).

Positions 1–24 (MPRPTSPHPDAERKSASPLHPRNR) are disordered.

This sequence belongs to the methyltransferase superfamily. METTL16/RlmF family.

Its subcellular location is the cytoplasm. It carries out the reaction adenosine(1618) in 23S rRNA + S-adenosyl-L-methionine = N(6)-methyladenosine(1618) in 23S rRNA + S-adenosyl-L-homocysteine + H(+). Functionally, specifically methylates the adenine in position 1618 of 23S rRNA. This Pseudomonas aeruginosa (strain LESB58) protein is Ribosomal RNA large subunit methyltransferase F.